A 202-amino-acid chain; its full sequence is Protein EMBRYO DEFECTIVE 514 (202 aa).

2 disordered regions span residues 1-69 (MAEE…PVKL) and 168-202 (MKTP…RFRR). A2 is modified (N-acetylalanine). 2 stretches are compositionally biased toward basic and acidic residues: residues 33 to 42 (ETGDEKRERE) and 51 to 65 (GESK…EKSG). Positions 174–202 (NGNGHGGGRGGGGGRRGGRGGGRGGRFRR) are enriched in gly residues.

Expressed in leaves, flowers and embryos at globular stage.

It is found in the nucleus. May play a role in ribosome biogenesis and in determining the rate of cell division. Involved in a process essential for nuclear and nucleolar functions. This Arabidopsis thaliana (Mouse-ear cress) protein is Protein EMBRYO DEFECTIVE 514.